The chain runs to 454 residues: MSTTDTIVAQATPPGRGGVGILRVSGRAASEVAHAVLGKLPKPRYADYLPFKDVDGSTLDQGIALYFPGPNSFTGEDVLELQGHGGPVILDLLLKRILALPGLRIARPGEFSERAFLNDKLDLAQAEAIADLIDASSEQAARSAVNSLQGAFSARIHQLVEALTHLRIYVEAAIDFPDEEIDFLSDGKIEGQLNGVMADLEQVRTEARQGSLLREGMKVVIAGRPNAGKSSLLNALAGREAAIVTDIAGTTRDVLREHIHIDGMPLHIIDTAGLREANDEVERIGIERAWNEIEQADRVLFMVDGTTTDATEPAAIWPEFMARLPATLPITVVRNKADITGETLGLTKVNGHSLIRLSARTGEGIDLLRDHLKQSMGFTSNTEGGFLARRRHLQALETAARHLIQGHEQLVSAYAGELLAEELRLAQQSLSEITGEFSSDDLLGRIFSSFCIGK.

3 residues coordinate (6S)-5-formyl-5,6,7,8-tetrahydrofolate: Arg23, Glu80, and Lys120. A TrmE-type G domain is found at Gly216–Gly377. Position 226 (Asn226) interacts with K(+). GTP-binding positions include Asn226–Ser231, Thr245–Thr251, Asp270–Gly273, Asn335–Asp338, and Ser358–Arg360. Ser230 is a binding site for Mg(2+). K(+) is bound by residues Thr245, Ile247, and Thr250. Thr251 contacts Mg(2+). Residue Lys454 participates in (6S)-5-formyl-5,6,7,8-tetrahydrofolate binding.

This sequence belongs to the TRAFAC class TrmE-Era-EngA-EngB-Septin-like GTPase superfamily. TrmE GTPase family. As to quaternary structure, homodimer. Heterotetramer of two MnmE and two MnmG subunits. The cofactor is K(+).

Its subcellular location is the cytoplasm. Exhibits a very high intrinsic GTPase hydrolysis rate. Involved in the addition of a carboxymethylaminomethyl (cmnm) group at the wobble position (U34) of certain tRNAs, forming tRNA-cmnm(5)s(2)U34. The protein is tRNA modification GTPase MnmE of Yersinia pestis bv. Antiqua (strain Antiqua).